Reading from the N-terminus, the 420-residue chain is Gamma-glutamyl phosphate reductase (420 aa).

This sequence belongs to the gamma-glutamyl phosphate reductase family.

The protein localises to the cytoplasm. It carries out the reaction L-glutamate 5-semialdehyde + phosphate + NADP(+) = L-glutamyl 5-phosphate + NADPH + H(+). It functions in the pathway amino-acid biosynthesis; L-proline biosynthesis; L-glutamate 5-semialdehyde from L-glutamate: step 2/2. In terms of biological role, catalyzes the NADPH-dependent reduction of L-glutamate 5-phosphate into L-glutamate 5-semialdehyde and phosphate. The product spontaneously undergoes cyclization to form 1-pyrroline-5-carboxylate. This Cereibacter sphaeroides (strain ATCC 17029 / ATH 2.4.9) (Rhodobacter sphaeroides) protein is Gamma-glutamyl phosphate reductase.